The sequence spans 479 residues: Carbohydrate sulfotransferase 3 (479 aa).

Topologically, residues 1 to 20 (MEKGLTLPQDCRDFVHSLKM) are cytoplasmic. A helical; Signal-anchor for type II membrane protein membrane pass occupies residues 21–38 (RSKYALFLVFVVIVFVFI). Over 39 to 479 (EKENKIISRV…LEERGTFWVT (441 aa)) the chain is Lumenal. N63, N74, and N96 each carry an N-linked (GlcNAc...) asparagine glycan. Residues 108–128 (EAAGEEEEEQRKEEEPPRPAV) form a disordered region. Position 141 to 147 (141 to 147 (TRTGSSF)) interacts with 3'-phosphoadenylyl sulfate. Residue N256 is glycosylated (N-linked (GlcNAc...) asparagine). 301-309 (RDPRAVLAS) lines the 3'-phosphoadenylyl sulfate pocket. Residues N420 and N464 are each glycosylated (N-linked (GlcNAc...) asparagine).

Belongs to the sulfotransferase 1 family. Gal/GlcNAc/GalNAc subfamily. Post-translationally, N-glycosylated. Widely expressed in adult tissues. Expressed in heart, placenta, skeletal muscle and pancreas. Also expressed in various immune tissues such as spleen, lymph node, thymus and appendix.

The protein resides in the golgi apparatus membrane. It catalyses the reaction chondroitin beta-D-glucuronate + n 3'-phosphoadenylyl sulfate = chondroitin 6'-sulfate + n adenosine 3',5'-bisphosphate + n H(+). The enzyme catalyses 3'-phosphoadenylyl sulfate + keratan = adenosine 3',5'-bisphosphate + keratan 6'-sulfate.. Sulfotransferase that utilizes 3'-phospho-5'-adenylyl sulfate (PAPS) as sulfonate donor to catalyze the transfer of sulfate to position 6 of the N-acetylgalactosamine (GalNAc) residue of chondroitin. Chondroitin sulfate constitutes the predominant proteoglycan present in cartilage and is distributed on the surfaces of many cells and extracellular matrices. Catalyzes with a lower efficiency the sulfation of Gal residues of keratan sulfate, another glycosaminoglycan. Can also catalyze the sulfation of the Gal residues in sialyl N-acetyllactosamine (sialyl LacNAc) oligosaccharides. May play a role in the maintenance of naive T-lymphocytes in the spleen. The sequence is that of Carbohydrate sulfotransferase 3 (CHST3) from Homo sapiens (Human).